A 74-amino-acid chain; its full sequence is Small ribosomal subunit protein bS18 (74 aa).

It belongs to the bacterial ribosomal protein bS18 family. As to quaternary structure, part of the 30S ribosomal subunit. Forms a tight heterodimer with protein bS6.

Its function is as follows. Binds as a heterodimer with protein bS6 to the central domain of the 16S rRNA, where it helps stabilize the platform of the 30S subunit. The sequence is that of Small ribosomal subunit protein bS18 from Chlorobaculum tepidum (strain ATCC 49652 / DSM 12025 / NBRC 103806 / TLS) (Chlorobium tepidum).